The primary structure comprises 39 residues: TTLTEPEPDLTYLTFVXIVXXEMPIFVMATANSGITSTF.

Requires a divalent metal cation as cofactor. As to expression, expressed mainly in the posterior salivary glands and, to a lesser extent, in the anterior salivary glands and secreted into the proboscis (at protein level).

It localises to the secreted. With respect to regulation, inhibited by EDTA, cysteine, DTT and sodium phosphate. Partially inhibited by EGTA, citrate, Tris and glycine. Not inhibited by DFP, PMSF, iodoacetic acid and leupeptin. Requires sodium chloride concentrations higher than 0.15 M for activity. Its function is as follows. Metalloprotease with anticoagulant activity. Cleaves fibrinogen Aalpha (FGA), gamma (FGG) and Bbeta (FGB) chains after positions 'Asn-121', 'Lys-160' and 'Pro-102', respectively. Breaks down cross-linked and non-cross-linked fibrin clots. Prevents and reverts platelet aggregation induced by ADP and collagen. Prevents thrombin-induced platelet clotting. Does not affect plasma levels of coagulation factors prothrombin (F2), V (F5), VII (F7), VIII (F8), IX (F9), X (F10), XI (F11), XII (F12), plasma kallikrein (KLKB1) and kininogen-1 (KNG1). The chain is Hementin from Haementeria ghilianii (Amazon leech).